The chain runs to 217 residues: Lipid transferase CIDEA (217 aa).

The region spanning 33–110 (PARPFRVSNH…ILEKGQKWTP (78 aa)) is the CIDE-N domain. The interval 163–180 (CTSFKAVLRNLLRFMSYA) is amphipathic helix.

The protein belongs to the CIDE family. As to quaternary structure, homodimer. Interacts with CIDEC. Directly interacts with CEBPB. Interacts with isoform CLSTN3beta of CLSTN3; inhibiting the lipid transferase activity of CIDEA. As to expression, highly expressed in brown adipose tissue and, at lower levels, in white adipose tissue (at protein level). Undetectable in undifferentiated preadipocytes. Expressed in mammary gland during pregnancy and lactation, in epithelial cells, but not in the surrounding adipose tissue. Secreted into milk via milk fat globules.

The protein localises to the lipid droplet. It is found in the nucleus. The enzyme catalyses a triacyl-sn-glycerol(in) = a triacyl-sn-glycerol(out). Functionally, lipid transferase that promotes unilocular lipid droplet formation by mediating lipid droplet fusion. Lipid droplet fusion promotes their enlargement, restricting lipolysis and favoring lipid storage. Localizes on the lipid droplet surface, at focal contact sites between lipid droplets, and mediates atypical lipid droplet fusion by promoting directional net neutral lipid transfer from the smaller to larger lipid droplets. The transfer direction may be driven by the internal pressure difference between the contacting lipid droplet pair and occurs at a lower rate than that promoted by CIDEC. May also act as a CEBPB coactivator in epithelial cells to control the expression of a subset of CEBPB downstream target genes, including ID2, IGF1, PRLR, SOCS1, SOCS3, XDH, but not casein. By interacting with CEBPB, strengthens the association of CEBPB with the XDH promoter, increases histone acetylation and dissociates HDAC1 from the promoter. When overexpressed, induces apoptosis; the physiological significance of its role in apoptosis is unclear. The polypeptide is Lipid transferase CIDEA (Mus musculus (Mouse)).